The following is a 346-amino-acid chain: L-threonine dehydratase catabolic TdcB (346 aa).

59 to 60 (FT) is an AMP binding site. Residue K64 is modified to N6-(pyridoxal phosphate)lysine. Residues Q94, 125 to 126 (GY), and N321 each bind AMP.

The protein belongs to the serine/threonine dehydratase family. In terms of assembly, in the native structure, TdcB is in a dimeric form, whereas in the TdcB-AMP complex, it exists in a tetrameric form (dimer of dimers). Pyridoxal 5'-phosphate is required as a cofactor.

It catalyses the reaction L-threonine = 2-oxobutanoate + NH4(+). Its pathway is amino-acid degradation; L-threonine degradation via propanoate pathway; propanoate from L-threonine: step 1/4. With respect to regulation, each protein molecule can bind up to four molecules of AMP, which act as an allosteric activator to the enzyme. Its function is as follows. Catalyzes the anaerobic formation of alpha-ketobutyrate and ammonia from threonine in a two-step reaction. The first step involved a dehydration of threonine and a production of enamine intermediates (aminocrotonate), which tautomerizes to its imine form (iminobutyrate). Both intermediates are unstable and short-lived. The second step is the nonenzymatic hydrolysis of the enamine/imine intermediates to form 2-ketobutyrate and free ammonia. In the low water environment of the cell, the second step is accelerated by RidA. This chain is L-threonine dehydratase catabolic TdcB (tdcB), found in Staphylococcus aureus (strain bovine RF122 / ET3-1).